Here is a 215-residue protein sequence, read N- to C-terminus: MASQQERASYHAGETKARAEEKTGRMMGTAQEKAREAKDTASDAAGRAMGRGHGAKEATKEKAYETKDATKEKAYEAKDAASDATGRAMDKGRGAAGATRDKAYDAKDRAADTAQSAADRARDGAGQTGSYIGQTAEAAKQKAAGAAQYAKETAIAGKDKTGAVLQQAGEQVKSVAVGAKDAVMYTLGMSGDNKNNAAAGKDTSTYKPGTGSDYQ.

Disordered regions lie at residues methionine 1–glycine 129 and serine 190–glutamine 215. 4 stretches are compositionally biased toward basic and acidic residues: residues glycine 13–glycine 24, glutamate 32–alanine 41, glycine 54–alanine 81, and alanine 88–alanine 111. Positions aspartate 192–glutamine 215 are enriched in polar residues.

It belongs to the LEA type 4 family. As to expression, expressed in the shoot apex and leaves. Expressed in dry seeds. Expressed in roots and leaves.

It localises to the nucleus. This Oryza sativa subsp. japonica (Rice) protein is Late embryogenesis abundant protein 14.